A 98-amino-acid chain; its full sequence is Peptide YY (98 aa).

An N-terminal signal peptide occupies residues 1-28 (MVAVRRPWPVTVAMLLILLACLGALVDA). A Phosphoserine modification is found at serine 41. Tyrosine 64 carries the tyrosine amide modification. Positions 68–98 (DVPAALFSKLLFTDDSDSENLPFRPEGLDQW) are excised as a propeptide.

The protein belongs to the NPY family. In terms of processing, the peptide YY form is cleaved at Pro-30 by the prolyl endopeptidase FAP (seprase) activity (in vitro) to generate peptide YY(3-36).

The protein resides in the secreted. Functionally, this gut peptide inhibits exocrine pancreatic secretion, has a vasoconstrictory action and inhibitis jejunal and colonic mobility. The polypeptide is Peptide YY (Pyy) (Mus musculus (Mouse)).